We begin with the raw amino-acid sequence, 178 residues long: uncharacterized protein (178 aa).

A signal peptide spans 1–19 (MKKLLIVTMLFTLALSAQA).

Belongs to the opacity porin family.

This is an uncharacterized protein from Haemophilus influenzae (strain ATCC 51907 / DSM 11121 / KW20 / Rd).